A 202-amino-acid chain; its full sequence is Proteasome subunit beta 1 (202 aa).

Positions 1–8 (MGEVVLPG) are cleaved as a propeptide — removed in mature form; by autocatalysis. The active-site Nucleophile is Thr9.

It belongs to the peptidase T1B family. As to quaternary structure, the 20S proteasome core is composed of 14 alpha and 14 beta subunits that assemble into four stacked heptameric rings, resulting in a barrel-shaped structure. The two inner rings, each composed of seven catalytic beta subunits, are sandwiched by two outer rings, each composed of seven alpha subunits. The catalytic chamber with the active sites is on the inside of the barrel. Has a gated structure, the ends of the cylinder being occluded by the N-termini of the alpha-subunits. Is capped at one or both ends by the proteasome regulatory ATPase, PAN.

Its subcellular location is the cytoplasm. It catalyses the reaction Cleavage of peptide bonds with very broad specificity.. The formation of the proteasomal ATPase PAN-20S proteasome complex, via the docking of the C-termini of PAN into the intersubunit pockets in the alpha-rings, triggers opening of the gate for substrate entry. Interconversion between the open-gate and close-gate conformations leads to a dynamic regulation of the 20S proteasome proteolysis activity. In terms of biological role, component of the proteasome core, a large protease complex with broad specificity involved in protein degradation. In Desulfurococcus amylolyticus (strain DSM 18924 / JCM 16383 / VKM B-2413 / 1221n) (Desulfurococcus kamchatkensis), this protein is Proteasome subunit beta 1.